The chain runs to 84 residues: Cell division topological specificity factor (84 aa).

The protein belongs to the MinE family.

In terms of biological role, prevents the cell division inhibition by proteins MinC and MinD at internal division sites while permitting inhibition at polar sites. This ensures cell division at the proper site by restricting the formation of a division septum at the midpoint of the long axis of the cell. The protein is Cell division topological specificity factor of Ralstonia nicotianae (strain ATCC BAA-1114 / GMI1000) (Ralstonia solanacearum).